A 542-amino-acid polypeptide reads, in one-letter code: Retron Ec83 probable ATPase (542 aa).

Residues 92-99 (GNNGCGKS) carry the ATP-binding motif.

In terms of biological role, probable ATPase component of antiviral defense system retron Ec83, composed of a non-coding RNA (ncRNA), a reverse transcriptase (RT), this protein and a putative HNH endonuclease. Expression of retron Ec83 confers protection against bacteriophage T2, T4 and T6. At multiplicity of infection (MOI) of 0.02 cultures slow growth when infected with T4 but do not collapse, at MOI 2 cultures enter growth stasis. This chain is Retron Ec83 probable ATPase, found in Escherichia coli.